The primary structure comprises 290 residues: Serine protease 27 (290 aa).

An N-terminal signal peptide occupies residues 1–22 (MRRPAAVPLLLLLCFGSQRAKA). Residues 23-34 (ATACGRPRMLNR) constitute a propeptide, activation peptide. The 243-residue stretch at 35 to 277 (MVGGQDTQEG…HHNWIHRIIP (243 aa)) folds into the Peptidase S1 domain. The N-linked (GlcNAc...) asparagine glycan is linked to Asn-55. The cysteines at positions 60 and 76 are disulfide-linked. The active-site Charge relay system is His-75. Asn-79 is a glycosylation site (N-linked (GlcNAc...) asparagine). The Charge relay system role is filled by Asp-124. 3 cysteine pairs are disulfide-bonded: Cys-158–Cys-235, Cys-191–Cys-214, and Cys-225–Cys-253. Catalysis depends on Ser-229, which acts as the Charge relay system.

The protein belongs to the peptidase S1 family. In terms of processing, N-glycosylated. As to expression, expressed predominantly in the pancreas.

Its subcellular location is the secreted. This is Serine protease 27 (PRSS27) from Homo sapiens (Human).